Reading from the N-terminus, the 236-residue chain is 2,3,4,5-tetrahydropyridine-2,6-dicarboxylate N-acetyltransferase (236 aa).

Belongs to the transferase hexapeptide repeat family. DapH subfamily.

The catalysed reaction is (S)-2,3,4,5-tetrahydrodipicolinate + acetyl-CoA + H2O = L-2-acetamido-6-oxoheptanedioate + CoA. The protein operates within amino-acid biosynthesis; L-lysine biosynthesis via DAP pathway; LL-2,6-diaminopimelate from (S)-tetrahydrodipicolinate (acetylase route): step 1/3. In terms of biological role, catalyzes the transfer of an acetyl group from acetyl-CoA to tetrahydrodipicolinate. This chain is 2,3,4,5-tetrahydropyridine-2,6-dicarboxylate N-acetyltransferase, found in Clostridium botulinum (strain ATCC 19397 / Type A).